The chain runs to 303 residues: 4-diphosphocytidyl-2-C-methyl-D-erythritol kinase (303 aa).

Residue Lys-24 is part of the active site. An ATP-binding site is contributed by 111 to 121 (PIASGIGGGSA). Residue Asp-153 is part of the active site.

Belongs to the GHMP kinase family. IspE subfamily.

It carries out the reaction 4-CDP-2-C-methyl-D-erythritol + ATP = 4-CDP-2-C-methyl-D-erythritol 2-phosphate + ADP + H(+). Its pathway is isoprenoid biosynthesis; isopentenyl diphosphate biosynthesis via DXP pathway; isopentenyl diphosphate from 1-deoxy-D-xylulose 5-phosphate: step 3/6. Catalyzes the phosphorylation of the position 2 hydroxy group of 4-diphosphocytidyl-2C-methyl-D-erythritol. The protein is 4-diphosphocytidyl-2-C-methyl-D-erythritol kinase of Rhizobium johnstonii (strain DSM 114642 / LMG 32736 / 3841) (Rhizobium leguminosarum bv. viciae).